The primary structure comprises 74 residues: Kappa-scoloptoxin(07)-Ssm2c (74 aa).

A signal peptide spans 1–19 (MLVFYAPLFVSIFSNTVMG). A propeptide spanning residues 20–41 (ATIDKPIPKPILREAIEKIAVN) is cleaved from the precursor.

The protein belongs to the scoloptoxin-07 family. Post-translationally, contains 3 disulfide bonds. Expressed by the venom gland.

It is found in the secreted. In terms of biological role, inhibits voltage-gated potassium channels. This is Kappa-scoloptoxin(07)-Ssm2c from Scolopendra mutilans (Chinese red-headed centipede).